Consider the following 499-residue polypeptide: Potassium voltage-gated channel subfamily A member 2 (499 aa).

A disordered region spans residues 1–26 (MTVATEDPADEAAALPGHPQDTYDPE). Residues 1-125 (MTVATEDPAD…YELGEEAMEM (125 aa)) form a tetramerization domain region. Over 1 to 160 (MTVATEDPAD…LLFEYPESSG (160 aa)) the chain is Cytoplasmic. A helical transmembrane segment spans residues 161 to 182 (PARIIAIVSVMVILISIVSFCL). Residues 183-221 (ETLPIFRDENEDMHGSGMTFHTYSNSTAGYQQSTSFTDP) lie on the Extracellular side of the membrane. Residue asparagine 207 is glycosylated (N-linked (GlcNAc...) asparagine). A helical membrane pass occupies residues 222–243 (FFIVETLCIIWFSFEFLVRFFA). Residue cysteine 244 is the site of S-palmitoyl cysteine attachment. The Cytoplasmic portion of the chain corresponds to 244 to 254 (CPSKAGFFTNI). The chain crosses the membrane as a helical span at residues 255-275 (MNIIDIVAIIPYFITLGTELA). Residues 276–289 (EKPEDAQQGQQAMS) lie on the Extracellular side of the membrane. The helical; Voltage-sensor transmembrane segment at 290-310 (LAILRVIRLVRVFRIFKLSRH) threads the bilayer. Over 311 to 325 (SKGLQILGQTLKASM) the chain is Cytoplasmic. Positions 312–325 (KGLQILGQTLKASM) are S4-S5 linker. A helical membrane pass occupies residues 326-347 (RELGLLIFFLFIGVILFSSAVY). Residues 348 to 361 (FAEADERDSQFPSI) lie on the Extracellular side of the membrane. The segment at residues 362 to 373 (PDAFWWAVVSMT) is an intramembrane region (helical). The Selectivity filter signature appears at 374 to 379 (TVGYGD). Residues 374–381 (TVGYGDMV) lie within the membrane without spanning it. Residues 382–388 (PTTIGGK) lie on the Extracellular side of the membrane. A helical transmembrane segment spans residues 389–417 (IVGSLCAIAGVLTIALPVPVIVSNFNYFY). Residues 418 to 499 (HRETEGEEQA…VNITKMLTDV (82 aa)) are Cytoplasmic-facing. Tyrosine 429 carries the phosphotyrosine modification. 4 positions are modified to phosphoserine: serine 434, serine 440, serine 441, and serine 449. The residue at position 458 (tyrosine 458) is a Phosphotyrosine. Position 468 is a phosphoserine (serine 468). The PDZ-binding signature appears at 497 to 499 (TDV).

Belongs to the potassium channel family. A (Shaker) (TC 1.A.1.2) subfamily. Kv1.2/KCNA2 sub-subfamily. In terms of assembly, homotetramer and heterotetramer with other channel-forming alpha subunits, such as KCNA1, KCNA4, KCNA5, KCNA6 and KCNA7. Channel activity is regulated by interaction with the beta subunits, including KCNAB1 and KCNAB2. Identified in a complex with KCNA1 and KCNAB2. Identified in a complex with KCNA4 and FYN. Identified in a complex with KCNA5 and KCNAB1. Interacts with the beta subunit KCNAB1. Interacts with PTK2B. Interacts (via C-terminus) with CTTN. Interacts (via N-terminal cytoplasmic domain) with RHOA (GTP-bound form); this regulates channel activity by reducing location at the cell surface in response to CHRM1 activation. Interacts with DRD2. Interacts with SIGMAR1; cocaine consumption leads to increased interaction. Interacts with ADAM22. Interacts with CNTNAP2. Interacts (via C-terminus) with the PDZ domains of DLG1, DLG2 and DLG4. Interacts with ADAM11. Interacts with LYNX1. Phosphorylated on tyrosine residues; phosphorylation increases in response to ischemia. Phosphorylated on tyrosine residues by activated PTK2B/PYK2. Phosphorylation on tyrosine residues suppresses ion channel activity. Phosphorylated on tyrosine residues in response to CHRM1 activation; this abolishes interaction with CTTN. This is probably due to endocytosis of the phosphorylated channel subunits. Phosphorylated on serine residues in response to increased cAMP levels; phosphorylation is apparently not catalyzed by PKA. In terms of processing, N-glycosylated, with complex, sialylated N-glycans. As to expression, detected in portal vein myocytes (at protein level). Detected in portal vein. Brain, liver and kidney.

It is found in the cell membrane. The protein resides in the membrane. The protein localises to the cell projection. Its subcellular location is the axon. It localises to the synapse. It is found in the presynaptic cell membrane. The protein resides in the synaptosome. The protein localises to the endoplasmic reticulum membrane. Its subcellular location is the dendrite. It localises to the lamellipodium membrane. It is found in the cell junction. The protein resides in the paranodal septate junction. It carries out the reaction K(+)(in) = K(+)(out). Inhibited by 4-aminopyridine (4-AP). Inhibited by dendrotoxin (DTX) and charybdotoxin (CTX), but not by tetraethylammonium (TEA). Inhibited by tityustoxin-K alpha (TsTX-Kalpha), a toxin that is highly specific for KCNA2. Inhibited by maurotoxin. Inhibited by kappaM conotoxins kappaM-RIIIJ and kappaM-RIIIK. Voltage-gated potassium channel that mediates transmembrane potassium transport in excitable membranes, primarily in the brain and the central nervous system, but also in the cardiovascular system. Prevents aberrant action potential firing and regulates neuronal output. Forms tetrameric potassium-selective channels through which potassium ions pass in accordance with their electrochemical gradient. The channel alternates between opened and closed conformations in response to the voltage difference across the membrane. Can form functional homotetrameric channels and heterotetrameric channels that contain variable proportions of KCNA1, KCNA2, KCNA4, KCNA5, KCNA6, KCNA7, and possibly other family members as well; channel properties depend on the type of alpha subunits that are part of the channel. Channel properties are modulated by cytoplasmic beta subunits that regulate the subcellular location of the alpha subunits and promote rapid inactivation of delayed rectifier potassium channels. In vivo, membranes probably contain a mixture of heteromeric potassium channel complexes, making it difficult to assign currents observed in intact tissues to any particular potassium channel family member. Homotetrameric KCNA2 forms a delayed-rectifier potassium channel that opens in response to membrane depolarization, followed by slow spontaneous channel closure. In contrast, a heteromultimer formed by KCNA2 and KCNA4 shows rapid inactivation. Regulates neuronal excitability and plays a role as pacemaker in the regulation of neuronal action potentials. KCNA2-containing channels play a presynaptic role and prevent hyperexcitability and aberrant action potential firing. Response to toxins that are selective for KCNA2-containing potassium channels suggests that in Purkinje cells, dendritic subthreshold KCNA2-containing potassium channels prevent random spontaneous calcium spikes, suppressing dendritic hyperexcitability without hindering the generation of somatic action potentials, and thereby play an important role in motor coordination. Plays a role in the induction of long-term potentiation of neuron excitability in the CA3 layer of the hippocampus. May function as down-stream effector for G protein-coupled receptors and inhibit GABAergic inputs to basolateral amygdala neurons. May contribute to the regulation of neurotransmitter release, such as gamma-aminobutyric acid (GABA). Contributes to the regulation of the axonal release of the neurotransmitter dopamine. Reduced KCNA2 expression plays a role in the perception of neuropathic pain after peripheral nerve injury, but not acute pain. Plays a role in the regulation of the time spent in non-rapid eye movement (NREM) sleep. The sequence is that of Potassium voltage-gated channel subfamily A member 2 (KCNA2) from Oryctolagus cuniculus (Rabbit).